The following is a 362-amino-acid chain: Glucuronokinase 1 (362 aa).

Position 126 to 136 (126 to 136) interacts with ATP; it reads PRQTGLSGSSA. The Proton acceptor role is filled by Asp-179.

The protein belongs to the GHMP kinase family. The cofactor is Mg(2+). Mn(2+) is required as a cofactor. It depends on Co(2+) as a cofactor. As to expression, highly expressed in pollen. Detected in seedlings, inflorescences, seeds, leaves and roots.

The enzyme catalyses D-glucuronate + ATP = 1-phospho-alpha-D-glucuronate + ADP + H(+). In terms of biological role, sugar-1-kinase with a strict substrate specificity for D-glucuronic acid and ATP. Involved in the biosynthesis of UDP-glucuronic acid (UDP-GlcA), providing nucleotide sugars for cell-wall polymers. May be also involved in a salvage pathway for glucuronic acid. The chain is Glucuronokinase 1 (GLCAK1) from Arabidopsis thaliana (Mouse-ear cress).